Here is a 166-residue protein sequence, read N- to C-terminus: Interleukin-2 (166 aa).

Residues 1 to 20 (MYSMQLASCVTLTLVLLVNS) form the signal peptide. Threonine 23 carries an O-linked (GalNAc...) threonine glycan. A disulfide bond links cysteine 89 and cysteine 137.

Belongs to the IL-2 family.

Its subcellular location is the secreted. Its function is as follows. Cytokine produced by activated CD4-positive helper T-cells and to a lesser extend activated CD8-positive T-cells and natural killer (NK) cells that plays pivotal roles in the immune response and tolerance. Binds to a receptor complex composed of either the high-affinity trimeric IL-2R (IL2RA/CD25, IL2RB/CD122 and IL2RG/CD132) or the low-affinity dimeric IL-2R (IL2RB and IL2RG). Interaction with the receptor leads to oligomerization and conformation changes in the IL-2R subunits resulting in downstream signaling starting with phosphorylation of JAK1 and JAK3. In turn, JAK1 and JAK3 phosphorylate the receptor to form a docking site leading to the phosphorylation of several substrates including STAT5. This process leads to activation of several pathways including STAT, phosphoinositide-3-kinase/PI3K and mitogen-activated protein kinase/MAPK pathways. Functions as a T-cell growth factor and can increase NK-cell cytolytic activity as well. Promotes strong proliferation of activated B-cells and subsequently immunoglobulin production. Plays a pivotal role in regulating the adaptive immune system by controlling the survival and proliferation of regulatory T-cells, which are required for the maintenance of immune tolerance. Moreover, participates in the differentiation and homeostasis of effector T-cell subsets, including Th1, Th2, Th17 as well as memory CD8-positive T-cells. This is Interleukin-2 (Il2) from Mus spretus (Western Mediterranean mouse).